Here is a 238-residue protein sequence, read N- to C-terminus: Orotidine 5'-phosphate decarboxylase (238 aa).

Residues D13, K35, 62–71, T121, R182, Q191, G211, and R212 contribute to the substrate site; that span reads DLKFHDIPNT. K64 functions as the Proton donor in the catalytic mechanism.

This sequence belongs to the OMP decarboxylase family. Type 1 subfamily. In terms of assembly, homodimer.

It carries out the reaction orotidine 5'-phosphate + H(+) = UMP + CO2. It functions in the pathway pyrimidine metabolism; UMP biosynthesis via de novo pathway; UMP from orotate: step 2/2. In terms of biological role, catalyzes the decarboxylation of orotidine 5'-monophosphate (OMP) to uridine 5'-monophosphate (UMP). In Saccharophagus degradans (strain 2-40 / ATCC 43961 / DSM 17024), this protein is Orotidine 5'-phosphate decarboxylase.